Reading from the N-terminus, the 415-residue chain is Serine hydroxymethyltransferase (415 aa).

Residues Leu-120 and Gly-124–Leu-126 contribute to the (6S)-5,6,7,8-tetrahydrofolate site. Residue Lys-229 is modified to N6-(pyridoxal phosphate)lysine.

The protein belongs to the SHMT family. In terms of assembly, homodimer. Pyridoxal 5'-phosphate is required as a cofactor.

It is found in the cytoplasm. It carries out the reaction (6R)-5,10-methylene-5,6,7,8-tetrahydrofolate + glycine + H2O = (6S)-5,6,7,8-tetrahydrofolate + L-serine. The protein operates within one-carbon metabolism; tetrahydrofolate interconversion. It functions in the pathway amino-acid biosynthesis; glycine biosynthesis; glycine from L-serine: step 1/1. Functionally, catalyzes the reversible interconversion of serine and glycine with tetrahydrofolate (THF) serving as the one-carbon carrier. This reaction serves as the major source of one-carbon groups required for the biosynthesis of purines, thymidylate, methionine, and other important biomolecules. Also exhibits THF-independent aldolase activity toward beta-hydroxyamino acids, producing glycine and aldehydes, via a retro-aldol mechanism. The protein is Serine hydroxymethyltransferase of Desulforudis audaxviator (strain MP104C).